The sequence spans 136 residues: Ribonuclease VapC1 (136 aa).

Positions 18–129 constitute a PINc domain; the sequence is ILVDTSVLID…KKHFERLKEF (112 aa). Mg(2+)-binding residues include Asp21 and Asp101.

Belongs to the PINc/VapC protein family. Mg(2+) serves as cofactor.

Toxic component of a type II toxin-antitoxin (TA) system. An RNase. Its cognate antitoxin is VapB1. The protein is Ribonuclease VapC1 of Methanocaldococcus jannaschii (strain ATCC 43067 / DSM 2661 / JAL-1 / JCM 10045 / NBRC 100440) (Methanococcus jannaschii).